We begin with the raw amino-acid sequence, 209 residues long: Nuclear transcription factor Y subunit beta (209 aa).

The segment at 1-53 is a domain; sequence MDADGSTTDASQLGITGDYIGGGHYVLQSSDGDAEGSLASGDHDESCGSKDPY. The interval 31 to 52 is disordered; the sequence is DGDAEGSLASGDHDESCGSKDP. A compositionally biased stretch (basic and acidic residues) spans 41 to 52; that stretch reads GDHDESCGSKDP. A b domain region spans residues 54-143; it reads REQDIYLPIA…PLKQYLQKYR (90 aa). A DNA-binding region spans residues 60–66; the sequence is LPIANVA. A subunit association domain (SAD) region spans residues 87-98; sequence VQECVSEFISFI. The tract at residues 144–209 is c domain; sequence ESMKGEKGIN…IPGVQPIQFT (66 aa).

This sequence belongs to the NFYB/HAP3 subunit family. As to quaternary structure, heterotrimeric transcription factor composed of three components, NF-YA, NF-YB and NF-YC. NF-YB and NF-YC must interact and dimerize for NF-YA association and DNA binding.

The protein resides in the nucleus. Its function is as follows. Component of the sequence-specific heterotrimeric transcription factor (NF-Y) which specifically recognizes a 5'-CCAAT-3' box motif found in the promoters of its target genes. NF-Y can function as both an activator and a repressor, depending on its interacting cofactors. In Petromyzon marinus (Sea lamprey), this protein is Nuclear transcription factor Y subunit beta (NFYB).